The primary structure comprises 329 residues: Ubiquitin carboxyl-terminal hydrolase isozyme L5 (329 aa).

In terms of domain architecture, UCH catalytic spans 7 to 225 (EWCLMESDPG…IRFNLMAIVS (219 aa)). An N6-succinyllysine modification is found at lysine 47. Cysteine 88 serves as the catalytic Nucleophile. Lysine 158 bears the N6-acetyllysine mark. Histidine 164 (proton donor) is an active-site residue. Lysine 289 is subject to N6-succinyllysine. Residues 291–319 (NYLPFIMELLKTLAEHQQLIPLVEKAKEK) enclose the ULD domain. The interval 313–329 (VEKAKEKQNAKKAQETK) is interaction with ADRM1.

The protein belongs to the peptidase C12 family. In terms of assembly, component of the 19S (PA700) regulatory complex of the 26S proteasome. Interacts with ADRM1 and NFRKB. Component of the INO80 complex; specifically part of a complex module associated with N-terminus of INO80.

It is found in the cytoplasm. Its subcellular location is the nucleus. The catalysed reaction is Thiol-dependent hydrolysis of ester, thioester, amide, peptide and isopeptide bonds formed by the C-terminal Gly of ubiquitin (a 76-residue protein attached to proteins as an intracellular targeting signal).. Its activity is regulated as follows. Activated by ADRM1. Inhibited by interaction with NFRKB. Its function is as follows. Protease that specifically cleaves 'Lys-48'-linked polyubiquitin chains. Deubiquitinating enzyme associated with the 19S regulatory subunit of the 26S proteasome. Putative regulatory component of the INO80 complex; however is inactive in the INO80 complex and is activated by a transient interaction of the INO80 complex with the proteasome via ADRM1. This Mus musculus (Mouse) protein is Ubiquitin carboxyl-terminal hydrolase isozyme L5 (Uchl5).